Reading from the N-terminus, the 89-residue chain is Large ribosomal subunit protein bL27 (89 aa).

Residues 1 to 21 (MAHKKAGGSSRNGRDSKGKRL) form a disordered region.

This sequence belongs to the bacterial ribosomal protein bL27 family.

This is Large ribosomal subunit protein bL27 from Bradyrhizobium sp. (strain BTAi1 / ATCC BAA-1182).